A 382-amino-acid chain; its full sequence is Beta-lactamase CMY-1 (382 aa).

An N-terminal signal peptide occupies residues 1 to 23; that stretch reads MQQRQSILWGAVATLMWAGLAHA. The active-site Acyl-ester intermediate is Ser-88. The a beta-lactam site is built by Ser-88, Gln-144, Tyr-174, Asn-176, and Asn-363.

Belongs to the class-C beta-lactamase family.

It carries out the reaction a beta-lactam + H2O = a substituted beta-amino acid. Inhibited by the beta-lactamase-blocking agent sulbactam. In terms of biological role, class C beta-lactamase which confers resistance to penicillins and cephalosporins. Has benzylpenicillin- and cefalotin-hydrolyzing activities. Has weak cefuroxime, cefotaxime, cefoxitin, imipenem and oxacillin-hydrolyzing activities. This chain is Beta-lactamase CMY-1, found in Klebsiella pneumoniae.